We begin with the raw amino-acid sequence, 1064 residues long: Importin-13 homolog A (1064 aa).

An Importin N-terminal domain is found at 40–109; sequence ALPQIQQWLI…LDNLLLFLKT (70 aa). Disordered stretches follow at residues 695 to 722 and 839 to 860; these read TTQQENNNNNNNNNNNNNNNNNNNNNNN and NNKKNNKKINNNIDIDNDNENN. The segment covering 700–722 has biased composition (low complexity); the sequence is NNNNNNNNNNNNNNNNNNNNNNN.

The protein belongs to the importin beta family. As to quaternary structure, forms a complex with an importin alpha subunit.

The protein resides in the cytoplasm. The protein localises to the nucleus envelope. Functionally, required for nuclear protein import and mediates docking of import substrate to distinct nucleoporins. The protein is Importin-13 homolog A (ipo13A) of Dictyostelium discoideum (Social amoeba).